Consider the following 215-residue polypeptide: 3-isopropylmalate dehydratase small subunit (215 aa).

The protein belongs to the LeuD family. LeuD type 1 subfamily. In terms of assembly, heterodimer of LeuC and LeuD.

It catalyses the reaction (2R,3S)-3-isopropylmalate = (2S)-2-isopropylmalate. Its pathway is amino-acid biosynthesis; L-leucine biosynthesis; L-leucine from 3-methyl-2-oxobutanoate: step 2/4. In terms of biological role, catalyzes the isomerization between 2-isopropylmalate and 3-isopropylmalate, via the formation of 2-isopropylmaleate. In Xanthomonas axonopodis pv. citri (strain 306), this protein is 3-isopropylmalate dehydratase small subunit.